Here is a 273-residue protein sequence, read N- to C-terminus: Large ribosomal subunit protein uL2cz/uL2cy (273 aa).

Disordered stretches follow at residues 1–23 (MAIH…SQVK) and 224–273 (NPVD…RRRK). Positions 262–273 (KYSDRFILRRRK) are enriched in basic and acidic residues.

This sequence belongs to the universal ribosomal protein uL2 family. In terms of assembly, part of the 50S ribosomal subunit.

It is found in the plastid. The protein localises to the chloroplast. This is Large ribosomal subunit protein uL2cz/uL2cy (rpl2-A) from Acorus calamus var. americanus (American sweet flag).